A 493-amino-acid polypeptide reads, in one-letter code: Galactose-1-phosphate uridylyltransferase (493 aa).

Belongs to the galactose-1-phosphate uridylyltransferase type 2 family.

Its subcellular location is the cytoplasm. The catalysed reaction is alpha-D-galactose 1-phosphate + UDP-alpha-D-glucose = alpha-D-glucose 1-phosphate + UDP-alpha-D-galactose. Its pathway is carbohydrate metabolism; galactose metabolism. This chain is Galactose-1-phosphate uridylyltransferase, found in Streptococcus pneumoniae (strain Hungary19A-6).